The sequence spans 300 residues: HTH-type transcriptional activator NahR (300 aa).

The region spanning L6–T63 is the HTH lysR-type domain. Residues V23 to K42 constitute a DNA-binding region (H-T-H motif).

This sequence belongs to the LysR transcriptional regulatory family.

It is found in the cytoplasm. Functionally, regulates the expression of the naphthalene (nahA-F) and salicylate (nahG-M) metabolism genes. This chain is HTH-type transcriptional activator NahR (nahR), found in Pseudomonas putida (Arthrobacter siderocapsulatus).